The sequence spans 201 residues: Ras-related protein Rab-9A (201 aa).

N-acetylalanine is present on A2. G17 contributes to the GDP binding site. GTP contacts are provided by G17, V18, G19, K20, S21, S22, T34, H38, and T39. The GDP site is built by G19, K20, S21, and S22. S21 provides a ligand contact to Mg(2+). The Switch 1 motif lies at 31–42 (KFDTQLFHTIGV). 2 residues coordinate Mg(2+): T39 and D62. The Switch 2 signature appears at 64-78 (AGQERFRSLRTPFYR). GTP contacts are provided by G65, N124, K125, D127, A155, and K156. Positions 124, 125, 127, 155, and 156 each coordinate GDP. Phosphoserine is present on S179. At T187 the chain carries Phosphothreonine. 2 S-geranylgeranyl cysteine lipidation sites follow: C200 and C201.

It belongs to the small GTPase superfamily. Rab family. Interacts (preferentially in its GTP-bound form) with GCC2 (via its GRIP domain). Interacts (GTP-bound form) with SGSM1; the GDP-bound form has much lower affinity for SGSM1. Interacts with SGSM2. The GTP-bound form but not the GDP-bound form interacts with HPS4 and BLOC-3 complex (heterodimer of HPS1 and HPS4) but does not interact with HPS1 alone. Interacts (GTP-bound form) with NDE1; two RAB9A-GTP molecules lie on the opposite sides of the NDE1 homodimer; the interaction leads to RAB9A-dynein motor tethering. Interacts (GTP-bound form) with NDEL1. Mg(2+) is required as a cofactor.

It localises to the cell membrane. The protein localises to the endoplasmic reticulum membrane. It is found in the golgi apparatus membrane. Its subcellular location is the late endosome. The protein resides in the cytoplasmic vesicle. It localises to the phagosome membrane. The protein localises to the phagosome. It is found in the cytoplasmic vesicle membrane. Its subcellular location is the melanosome. The enzyme catalyses GTP + H2O = GDP + phosphate + H(+). Regulated by guanine nucleotide exchange factors (GEFs) which promote the exchange of bound GDP for free GTP. Regulated by GTPase activating proteins (GAPs) which increase the GTP hydrolysis activity. Inhibited by GDP dissociation inhibitors (GDIs). Its function is as follows. The small GTPases Rab are key regulators of intracellular membrane trafficking, from the formation of transport vesicles to their fusion with membranes. Rabs cycle between an inactive GDP-bound form and an active GTP-bound form that is able to recruit to membranes different sets of downstream effectors directly responsible for vesicle formation, movement, tethering and fusion. RAB9A is involved in the transport of proteins between the endosomes and the trans-Golgi network (TGN). Specifically uses NDE1/NDEL1 as an effector to interact with the dynein motor complex in order to control retrograde trafficking of RAB9-associated late endosomes to the TGN. Involved in the recruitment of SGSM2 to melanosomes and is required for the proper trafficking of melanogenic enzymes TYR, TYRP1 and DCT/TYRP2 to melanosomes in melanocytes. This Homo sapiens (Human) protein is Ras-related protein Rab-9A.